Here is a 160-residue protein sequence, read N- to C-terminus: MKKAHMFLATAAALGVAMFPTQINEAARGLRNNNPLNIKEGSDGGAQWEGEHELDLDPTFEEFKTPVHGIRAGARILRTYAVKYGLESIEGIIARWAPEEENDTENYINFVANKTGIPRNQKLNDETYPAVISAMIDMENGSNPYTYDEIKKGFEWGFYG.

Residues 7-23 (FLATAAALGVAMFPTQI) form a helical membrane-spanning segment.

The protein localises to the virion membrane. The protein is Protein P5 (V) of Pseudoalteromonas espejiana (Bacteriophage PM2).